A 223-amino-acid chain; its full sequence is Endonuclease V (223 aa).

Mg(2+) contacts are provided by Asp-35 and Asp-103.

It belongs to the endonuclease V family. It depends on Mg(2+) as a cofactor.

It is found in the cytoplasm. The enzyme catalyses Endonucleolytic cleavage at apurinic or apyrimidinic sites to products with a 5'-phosphate.. Functionally, DNA repair enzyme involved in the repair of deaminated bases. Selectively cleaves double-stranded DNA at the second phosphodiester bond 3' to a deoxyinosine leaving behind the intact lesion on the nicked DNA. This chain is Endonuclease V, found in Shigella flexneri serotype 5b (strain 8401).